We begin with the raw amino-acid sequence, 261 residues long: Cytochrome c oxidase subunit 3 (261 aa).

The Mitochondrial matrix segment spans residues 1–15 (MTHQTHAYHMVNPSP). The chain crosses the membrane as a helical span at residues 16–34 (WPLTGALSALLMTSGLIMW). The Mitochondrial intermembrane segment spans residues 35–40 (FHFNSM). A helical transmembrane segment spans residues 41-66 (YLLMLGLTTNTLTMYQWWRDIVREST). Residues 67–72 (FQGHHT) are Mitochondrial matrix-facing. Residues 73 to 105 (PIVQKGLRYGMILFIVSEVFFFAGFFWAFYHSS) form a helical membrane-spanning segment. Residues 106 to 128 (LAPTPELGGCWPPTGITPLNPME) lie on the Mitochondrial intermembrane side of the membrane. The helical transmembrane segment at 129-152 (VPLLNTSVLLASGVSITWAHHSLM) threads the bilayer. Over 153–155 (EGN) the chain is Mitochondrial matrix. A helical membrane pass occupies residues 156 to 183 (RKHMLQALFITISLGVYFTLLQASEYYE). Topologically, residues 184–190 (TPFTISD) are mitochondrial intermembrane. A helical membrane pass occupies residues 191–223 (GIYGSTFFMATGFHGLHVIIGSTFLIVCFMRQL). Residues 224–232 (KFHFTSNHH) lie on the Mitochondrial matrix side of the membrane. The helical transmembrane segment at 233–256 (FGFEAAAWYWHFVDVVWLFLYVSI) threads the bilayer. At 257–261 (YWWGS) the chain is on the mitochondrial intermembrane side.

The protein belongs to the cytochrome c oxidase subunit 3 family. Component of the cytochrome c oxidase (complex IV, CIV), a multisubunit enzyme composed of 14 subunits. The complex is composed of a catalytic core of 3 subunits MT-CO1, MT-CO2 and MT-CO3, encoded in the mitochondrial DNA, and 11 supernumerary subunits COX4I, COX5A, COX5B, COX6A, COX6B, COX6C, COX7A, COX7B, COX7C, COX8 and NDUFA4, which are encoded in the nuclear genome. The complex exists as a monomer or a dimer and forms supercomplexes (SCs) in the inner mitochondrial membrane with NADH-ubiquinone oxidoreductase (complex I, CI) and ubiquinol-cytochrome c oxidoreductase (cytochrome b-c1 complex, complex III, CIII), resulting in different assemblies (supercomplex SCI(1)III(2)IV(1) and megacomplex MCI(2)III(2)IV(2)).

It localises to the mitochondrion inner membrane. The enzyme catalyses 4 Fe(II)-[cytochrome c] + O2 + 8 H(+)(in) = 4 Fe(III)-[cytochrome c] + 2 H2O + 4 H(+)(out). Component of the cytochrome c oxidase, the last enzyme in the mitochondrial electron transport chain which drives oxidative phosphorylation. The respiratory chain contains 3 multisubunit complexes succinate dehydrogenase (complex II, CII), ubiquinol-cytochrome c oxidoreductase (cytochrome b-c1 complex, complex III, CIII) and cytochrome c oxidase (complex IV, CIV), that cooperate to transfer electrons derived from NADH and succinate to molecular oxygen, creating an electrochemical gradient over the inner membrane that drives transmembrane transport and the ATP synthase. Cytochrome c oxidase is the component of the respiratory chain that catalyzes the reduction of oxygen to water. Electrons originating from reduced cytochrome c in the intermembrane space (IMS) are transferred via the dinuclear copper A center (CU(A)) of subunit 2 and heme A of subunit 1 to the active site in subunit 1, a binuclear center (BNC) formed by heme A3 and copper B (CU(B)). The BNC reduces molecular oxygen to 2 water molecules using 4 electrons from cytochrome c in the IMS and 4 protons from the mitochondrial matrix. This Halichoerus grypus (Gray seal) protein is Cytochrome c oxidase subunit 3 (MT-CO3).